A 383-amino-acid polypeptide reads, in one-letter code: Protein delta homolog 2 (383 aa).

A signal peptide spans 1–26 (MPSGCRCLHLVCLLCILGAPGQPVRA). 4 consecutive EGF-like domains span residues 27-58 (DDCS…LHCE), 62-89 (RMPG…KFCD), 91-129 (DEHI…RDCE), and 131-172 (KAGP…ARCE). The Extracellular portion of the chain corresponds to 27-306 (DDCSSHCDLA…RQEAGLGEPS (280 aa)). 17 disulfides stabilise this stretch: Cys-29–Cys-40, Cys-33–Cys-46, Cys-48–Cys-57, Cys-66–Cys-71, Cys-79–Cys-88, Cys-95–Cys-107, Cys-101–Cys-117, Cys-119–Cys-128, Cys-135–Cys-148, Cys-142–Cys-160, Cys-162–Cys-171, Cys-178–Cys-189, Cys-183–Cys-198, Cys-200–Cys-209, Cys-216–Cys-227, Cys-221–Cys-236, and Cys-238–Cys-247. Residue Asn-157 is glycosylated (N-linked (GlcNAc...) asparagine). The 37-residue stretch at 174 to 210 (NVDDCLMRPCANGATCLDGINRFSCLCPEGFAGRFCT) folds into the EGF-like 5; calcium-binding domain. The 37-residue stretch at 212 to 248 (NLDDCASRPCQRGARCRDRVHDFDCLCPSGYGGKTCE) folds into the EGF-like 6; calcium-binding domain. Residues 307-327 (LVALVVFGALTAALVLATVLL) form a helical membrane-spanning segment. Residues 328 to 383 (TLRAWRRGVCPPGPCCYPAPHYAPACQDQECQVSMLPAGLPLPRDLPPEPGKTTAL) lie on the Cytoplasmic side of the membrane.

The protein localises to the membrane. Regulates adipogenesis. This chain is Protein delta homolog 2 (DLK2), found in Homo sapiens (Human).